Here is a 228-residue protein sequence, read N- to C-terminus: Lipoprotein-releasing system ATP-binding protein LolD (228 aa).

The 224-residue stretch at 5–228 (FALSAISKSF…SGTLQNYTDY (224 aa)) folds into the ABC transporter domain. 40-47 (GPSGSGKS) serves as a coordination point for ATP.

The protein belongs to the ABC transporter superfamily. Lipoprotein translocase (TC 3.A.1.125) family. As to quaternary structure, the complex is composed of two ATP-binding proteins (LolD) and two transmembrane proteins (LolC and LolE).

The protein resides in the cell inner membrane. Functionally, part of the ABC transporter complex LolCDE involved in the translocation of mature outer membrane-directed lipoproteins, from the inner membrane to the periplasmic chaperone, LolA. Responsible for the formation of the LolA-lipoprotein complex in an ATP-dependent manner. In Ehrlichia ruminantium (strain Gardel), this protein is Lipoprotein-releasing system ATP-binding protein LolD.